A 175-amino-acid chain; its full sequence is Bifunctional protein PyrR (175 aa).

Residues I97 to T109 carry the PRPP-binding motif.

The protein belongs to the purine/pyrimidine phosphoribosyltransferase family. PyrR subfamily. As to quaternary structure, homodimer and homohexamer; in equilibrium.

The catalysed reaction is UMP + diphosphate = 5-phospho-alpha-D-ribose 1-diphosphate + uracil. Its function is as follows. Regulates transcriptional attenuation of the pyrimidine nucleotide (pyr) operon by binding in a uridine-dependent manner to specific sites on pyr mRNA. This disrupts an antiterminator hairpin in the RNA and favors formation of a downstream transcription terminator, leading to a reduced expression of downstream genes. In terms of biological role, also displays a weak uracil phosphoribosyltransferase activity which is not physiologically significant. The polypeptide is Bifunctional protein PyrR (Leuconostoc citreum (strain KM20)).